The chain runs to 341 residues: Cell wall mannoprotein PIR1 (341 aa).

The signal sequence occupies residues 1–18 (MQYKKSLVASALVATSLA). The propeptide occupies 19-63 (AYAPKDPWSTLTPSATYKGGITDYSSTFGIAVEPIATTASSKAKR). PIR1/2/3 repeat units lie at residues 64–82 (AAAI…TKTT), 83–101 (AAAV…TKTK), 102–120 (AAAV…TKTT), 126–144 (AAAV…TKTK), 145–163 (AAAV…TKTT), 164–182 (AAAV…TKTT), 183–201 (AAAV…TNTT), and 202–220 (VAPV…TLTS).

The protein belongs to the PIR protein family. Covalently linked to beta-1,3-glucan of the inner cell wall layer via an alkali-sensitive ester linkage between the gamma-carboxyl group of glutamic acids, arising from specific glutamines within the PIR1/2/3 repeats, and hydroxyl groups of glucoses of beta-1,3-glucan chains. In terms of processing, O-glycosylated. Extensively O-mannosylated.

The protein localises to the secreted. Its subcellular location is the cell wall. Its function is as follows. Component of the outer cell wall layer. Required for stability of the cell wall and for optimal growth. Required for resistance against several antifungal and cell wall-perturbing agents and for tolerance to heat shock. This Saccharomyces cerevisiae (strain YJM789) (Baker's yeast) protein is Cell wall mannoprotein PIR1 (PIR1).